The following is a 320-amino-acid chain: MLDAPDTAVLAVNLGTPETPTAPAVRRYLAEFLSDPRVVSIPALLWQPLLRGLILPLRSSRSAAKYAQVWLPDGSPLMVYTRQLAQAMQALLPSLTVRHAMRYGEPALGSELDCLAAEGARRIVVLPLYPQYSTTTTASVEDRVDAWQRRNPGVTVSLVRDYSVDPGWVEAVAGSIRRYWEQQGRGQTLMFSFHGIPQRLADGGDPYPQRCEASARAIANALGLASDEWQLGYQSRFGRERWLQPYAEPSLWALAESGVKQIDVVCPGFATDCLETLEEVAMGFTETLAERGATMRYIPCLNAEPDHARALARLAVASLA.

2 residues coordinate Fe cation: histidine 194 and glutamate 275.

It belongs to the ferrochelatase family.

It is found in the cytoplasm. The catalysed reaction is heme b + 2 H(+) = protoporphyrin IX + Fe(2+). Its pathway is porphyrin-containing compound metabolism; protoheme biosynthesis; protoheme from protoporphyrin-IX: step 1/1. Functionally, catalyzes the ferrous insertion into protoporphyrin IX. The polypeptide is Ferrochelatase (Stenotrophomonas maltophilia (strain R551-3)).